Consider the following 490-residue polypeptide: Flap endonuclease 1 (490 aa).

The segment at 1-106 is N-domain; sequence MGIKGLTKFL…DELTKRDERR (106 aa). Asp-34 serves as a coordination point for Mg(2+). Arg-47 and Arg-72 together coordinate DNA. Positions 88, 160, 162, 181, and 183 each coordinate Mg(2+). Residues 124 to 266 form an I-domain region; that stretch reads LIKKQSVRTI…STAYKLLKKY (143 aa). A DNA-binding site is contributed by Glu-160. The DNA site is built by Gly-244 and Asp-246. Asp-246 contacts Mg(2+). An interaction with PCNA region spans residues 351–359; the sequence is SQTCLDGFF. 2 disordered regions span residues 364-396 and 421-490; these read NERK…SLSC and SSQA…SDED. The segment covering 430 to 442 has biased composition (polar residues); the sequence is ENSSEAPNQSSEI. The span at 443 to 454 shows a compositional bias: basic and acidic residues; that stretch reads KVNKIEENKDSE. Polar residues predominate over residues 455–469; that stretch reads SSTVENTPSLQTKSP.

The protein belongs to the XPG/RAD2 endonuclease family. FEN1 subfamily. As to quaternary structure, interacts with PCNA. Three molecules of FEN1 bind to one PCNA trimer with each molecule binding to one PCNA monomer. PCNA stimulates the nuclease activity without altering cleavage specificity. The cofactor is Mg(2+). Phosphorylated. Phosphorylation upon DNA damage induces relocalization to the nuclear plasma.

It localises to the nucleus. The protein localises to the nucleolus. It is found in the nucleoplasm. Its subcellular location is the mitochondrion. Structure-specific nuclease with 5'-flap endonuclease and 5'-3' exonuclease activities involved in DNA replication and repair. During DNA replication, cleaves the 5'-overhanging flap structure that is generated by displacement synthesis when DNA polymerase encounters the 5'-end of a downstream Okazaki fragment. It enters the flap from the 5'-end and then tracks to cleave the flap base, leaving a nick for ligation. Also involved in the long patch base excision repair (LP-BER) pathway, by cleaving within the apurinic/apyrimidinic (AP) site-terminated flap. Acts as a genome stabilization factor that prevents flaps from equilibrating into structures that lead to duplications and deletions. Also possesses 5'-3' exonuclease activity on nicked or gapped double-stranded DNA, and exhibits RNase H activity. Also involved in replication and repair of rDNA and in repairing mitochondrial DNA. The chain is Flap endonuclease 1 from Cryptosporidium parvum (strain Iowa II).